A 431-amino-acid polypeptide reads, in one-letter code: Divergent protein kinase domain 1B (431 aa).

At 1-30 the chain is on the cytoplasmic side; the sequence is MRRLRRLVHLVLLCPFSKGLQGRLPGLRVK. The May mediate ER retention signature appears at 5–6; sequence RR. The helical transmembrane segment at 31–51 threads the bilayer; that stretch reads YVLLVWLGIFVGSWMVYVHYS. Residues 52 to 431 lie on the Lumenal side of the membrane; it reads SYSELCRGHV…WREISNTNYS (380 aa). Cystine bridges form between C57/C94 and C62/C117.

The protein belongs to the DIPK family. Among the many cysteines in the lumenal domain, most are probably involved in disulfide bonds. As to expression, expressed in kidney, testis, lung, heart, stomach, intestine, pancreas, liver and salivary gland. Strongly expressed in acute pancreatitis, brain, and in peripheral endothelial cells.

Its subcellular location is the endoplasmic reticulum membrane. The polypeptide is Divergent protein kinase domain 1B (Dipk1b) (Mus musculus (Mouse)).